Consider the following 355-residue polypeptide: Guanine nucleotide-binding protein G(i) subunit alpha (355 aa).

Glycine 2 carries N-myristoyl glycine lipidation. The S-palmitoyl cysteine moiety is linked to residue cysteine 3. Residues 33-355 (REVKLLLLGA…KNNLKDCGLF (323 aa)) enclose the G-alpha domain. The segment at 36 to 49 (KLLLLGAGESGKST) is G1 motif. GTP contacts are provided by residues 41 to 48 (GAGESGKS), 176 to 182 (LRTRVKT), 201 to 205 (DVGGQ), 270 to 273 (NKKD), and alanine 327. Mg(2+) contacts are provided by serine 48 and threonine 182. The segment at 174–182 (DVLRTRVKT) is G2 motif. The G3 motif stretch occupies residues 197 to 206 (FKLFDVGGQR). The G4 motif stretch occupies residues 266–273 (ILFLNKKD). The G5 motif stretch occupies residues 325 to 330 (TCATDT).

This sequence belongs to the G-alpha family. G(i/o/t/z) subfamily. In terms of assembly, g proteins are composed of 3 units; alpha, beta and gamma. The alpha chain contains the guanine nucleotide binding site.

Functionally, guanine nucleotide-binding proteins (G proteins) are involved as modulators or transducers in various transmembrane signaling systems. The protein is Guanine nucleotide-binding protein G(i) subunit alpha of Homarus americanus (American lobster).